Here is a 122-residue protein sequence, read N- to C-terminus: Large ribosomal subunit protein uL14 (122 aa).

Belongs to the universal ribosomal protein uL14 family. As to quaternary structure, part of the 50S ribosomal subunit. Forms a cluster with proteins L3 and L19. In the 70S ribosome, L14 and L19 interact and together make contacts with the 16S rRNA in bridges B5 and B8.

Binds to 23S rRNA. Forms part of two intersubunit bridges in the 70S ribosome. In Pelagibacter ubique (strain HTCC1062), this protein is Large ribosomal subunit protein uL14.